The primary structure comprises 394 residues: RHOMBOID-like protein 4 (394 aa).

The disordered stretch occupies residues 1 to 51 (MGEKDSETAPIWGKTRERERSNNNNIQPMDLESSSSVSGQQRSLTQSRSSY). Positions 39–49 (GQQRSLTQSRS) are enriched in polar residues. The next 7 helical transmembrane spans lie at 64 to 84 (WFPWLIPCFVVANVAVFVITM), 147 to 167 (WLHGGVVHLLMNMLTLLFIGI), 175 to 195 (FIRIGLLYLISGFGGSILSAL), 201 to 221 (ISVGASGAVFGLLGGMLSEIF), 231 to 251 (VVTIVTLVLIVAVNLGLGVLP), 254 to 274 (DNFAHIGGFATGFLLGFVLLI), and 300 to 320 (ILWTISLLILVAGFIVGLISL). S206 functions as the Nucleophile in the catalytic mechanism. Residue H258 is the Charge relay system of the active site.

This sequence belongs to the peptidase S54 family.

Its subcellular location is the membrane. The catalysed reaction is Cleaves type-1 transmembrane domains using a catalytic dyad composed of serine and histidine that are contributed by different transmembrane domains.. Probable rhomboid-type serine protease that catalyzes intramembrane proteolysis. The polypeptide is RHOMBOID-like protein 4 (Arabidopsis thaliana (Mouse-ear cress)).